Reading from the N-terminus, the 479-residue chain is Glutamate--tRNA ligase (479 aa).

The 'HIGH' region signature appears at 21–31; that stretch reads PSPTGYLHVGG. A 'KMSKS' region motif is present at residues 248–252; that stretch reads KLSKR. An ATP-binding site is contributed by Lys251.

This sequence belongs to the class-I aminoacyl-tRNA synthetase family. Glutamate--tRNA ligase type 1 subfamily. As to quaternary structure, monomer.

The protein resides in the cytoplasm. The catalysed reaction is tRNA(Glu) + L-glutamate + ATP = L-glutamyl-tRNA(Glu) + AMP + diphosphate. In terms of biological role, catalyzes the attachment of glutamate to tRNA(Glu) in a two-step reaction: glutamate is first activated by ATP to form Glu-AMP and then transferred to the acceptor end of tRNA(Glu). In Actinobacillus pleuropneumoniae serotype 7 (strain AP76), this protein is Glutamate--tRNA ligase.